The following is a 315-amino-acid chain: Methionyl-tRNA formyltransferase (315 aa).

113–116 (SILP) lines the (6S)-5,6,7,8-tetrahydrofolate pocket.

The protein belongs to the Fmt family.

The catalysed reaction is L-methionyl-tRNA(fMet) + (6R)-10-formyltetrahydrofolate = N-formyl-L-methionyl-tRNA(fMet) + (6S)-5,6,7,8-tetrahydrofolate + H(+). Attaches a formyl group to the free amino group of methionyl-tRNA(fMet). The formyl group appears to play a dual role in the initiator identity of N-formylmethionyl-tRNA by promoting its recognition by IF2 and preventing the misappropriation of this tRNA by the elongation apparatus. In Vibrio parahaemolyticus serotype O3:K6 (strain RIMD 2210633), this protein is Methionyl-tRNA formyltransferase.